Reading from the N-terminus, the 121-residue chain is Immunoglobulin heavy variable 6-1 (121 aa).

The first 20 residues, 1 to 20, serve as a signal peptide directing secretion; sequence MSVSFLIFLPVLGLPWGVLS. Positions 21–45 are framework-1; that stretch reads QVQLQQSGPGLVKPSQTLSLTCAIS. The Ig-like domain occupies 21–121; that stretch reads QVQLQQSGPG…EDTAVYYCAR (101 aa). An intrachain disulfide couples Cys42 to Cys119. The complementarity-determining-1 stretch occupies residues 46 to 55; that stretch reads GDSVSSNSAA. Positions 56–72 are framework-2; it reads WNWIRQSPSRGLEWLGR. The complementarity-determining-2 stretch occupies residues 73–81; the sequence is TYYRSKWYN. A framework-3 region spans residues 82-119; that stretch reads DYAVSVKSRITINPDTSKNQFSLQLNSVTPEDTAVYYC. The tract at residues 120-121 is complementarity-determining-3; that stretch reads AR.

Immunoglobulins are composed of two identical heavy chains and two identical light chains; disulfide-linked.

Its subcellular location is the secreted. It localises to the cell membrane. Its function is as follows. V region of the variable domain of immunoglobulin heavy chains that participates in the antigen recognition. Immunoglobulins, also known as antibodies, are membrane-bound or secreted glycoproteins produced by B lymphocytes. In the recognition phase of humoral immunity, the membrane-bound immunoglobulins serve as receptors which, upon binding of a specific antigen, trigger the clonal expansion and differentiation of B lymphocytes into immunoglobulins-secreting plasma cells. Secreted immunoglobulins mediate the effector phase of humoral immunity, which results in the elimination of bound antigens. The antigen binding site is formed by the variable domain of one heavy chain, together with that of its associated light chain. Thus, each immunoglobulin has two antigen binding sites with remarkable affinity for a particular antigen. The variable domains are assembled by a process called V-(D)-J rearrangement and can then be subjected to somatic hypermutations which, after exposure to antigen and selection, allow affinity maturation for a particular antigen. This is Immunoglobulin heavy variable 6-1 from Homo sapiens (Human).